We begin with the raw amino-acid sequence, 85 residues long: Polcalcin Aln g 4 (85 aa).

EF-hand domains are found at residues 7-42 (QDQAEHERIFKCFDANGDGKISASELGDALKTLGSV) and 45-77 (DEVKHMMAEIDTDGDGFISFQEFTNFARANRGL). The Ca(2+) site is built by Asp20, Asn22, Asp24, Lys26, Glu31, Asp55, Asp57, Asp59, and Glu66.

This chain is Polcalcin Aln g 4, found in Alnus glutinosa (European alder).